The following is a 616-amino-acid chain: Ectonucleoside triphosphate diphosphohydrolase 4 (616 aa).

The Cytoplasmic portion of the chain corresponds to 1–33 (MGRIGISCLFPASWHFSISPVGCPRILNTNLRQ). Residues 34-54 (IMVISVLAAAVSLLYFSVVII) form a helical membrane-spanning segment. The Lumenal portion of the chain corresponds to 55–559 (RNKYGRLTRD…ASHTHWRGVS (505 aa)). The Proton acceptor role is filled by Glu-222. Cys-368 and Cys-395 are disulfide-bonded. N-linked (GlcNAc...) asparagine glycans are attached at residues Asn-404 and Asn-407. A disulfide bond links Cys-461 and Cys-490. The helical transmembrane segment at 560–580 (FVYNHYLFSGCFLVVLLAILL) threads the bilayer. The Cytoplasmic segment spans residues 581–616 (YLLRLRRIHRRTPRSSSAAALWMEEGLPAQNAPGTL).

The protein belongs to the GDA1/CD39 NTPase family. Ca(2+) is required as a cofactor. The cofactor is Mg(2+). In terms of tissue distribution, ubiquitous. Highest expression in testis and lowest in bladder.

The protein resides in the cytoplasmic vesicle. It is found in the autophagosome membrane. It localises to the lysosome membrane. The protein localises to the golgi apparatus membrane. It carries out the reaction a ribonucleoside 5'-diphosphate + H2O = a ribonucleoside 5'-phosphate + phosphate + H(+). It catalyses the reaction a ribonucleoside 5'-triphosphate + H2O = a ribonucleoside 5'-diphosphate + phosphate + H(+). The catalysed reaction is UDP + H2O = UMP + phosphate + H(+). The enzyme catalyses UTP + H2O = UDP + phosphate + H(+). It carries out the reaction CTP + H2O = CDP + phosphate + H(+). It catalyses the reaction GDP + H2O = GMP + phosphate + H(+). The catalysed reaction is GTP + H2O = GDP + phosphate + H(+). The enzyme catalyses 5-methyl-UTP + H2O = 5-methyl-UDP + phosphate + H(+). In terms of biological role, catalyzes the hydrolysis of nucleoside triphosphates and diphosphates in a calcium- or magnesium-dependent manner, with a preference for pyrimidines. Preferentially hydrolyzes UTP and TTP. AMP, ADP, ATP and UMP are not substrates. Preferentially activated by Ca(2+) over Mg(2+). Has a broad substrate specificity with the ability of cleaving all nucleotide di- and triphosphates with the exception of adenosine di- and triphosphate (ADP and ATP). Preferentially hydrolyzes CTP, UDP, CDP, GTP and GDP. Can use either Ca(2+) or Mg(2+) equally. In Homo sapiens (Human), this protein is Ectonucleoside triphosphate diphosphohydrolase 4.